The chain runs to 185 residues: UPF0669 protein C6orf120 homolog (185 aa).

The first 23 residues, Met1 to Cys23, serve as a signal peptide directing secretion. N-linked (GlcNAc...) asparagine glycosylation occurs at Asn47.

It belongs to the UPF0669 family.

The protein localises to the secreted. Its function is as follows. May be involved in induction of apoptosis in CD4(+) T-cells, but not CD8(+) T-cells or hepatocytes. This is UPF0669 protein C6orf120 homolog from Mus musculus (Mouse).